The chain runs to 612 residues: Oligopeptide transport ATP-binding protein OppD (612 aa).

The ABC transporter 1 domain maps to 5–255 (LEVTDLAVTF…RRMPYTVGLL (251 aa)). ATP-binding residues include serine 43, glycine 44, serine 45, glycine 46, lysine 47, serine 48, alanine 49, tyrosine 61, glutamine 96, arginine 147, glycine 158, glutamate 159, and histidine 213. 4 residues coordinate [4Fe-4S] cluster: cysteine 286, cysteine 292, cysteine 299, and cysteine 317. The 251-residue stretch at 350–600 (VRVRHLVKTY…PKHEYTRRLL (251 aa)) folds into the ABC transporter 2 domain. Residues serine 396, glycine 397, serine 398, glycine 399, lysine 400, serine 401, threonine 402, glutamine 445, arginine 495, glutamate 499, glycine 503, and histidine 558 each contribute to the ATP site.

It belongs to the ABC transporter superfamily. In terms of assembly, the complex is composed of an ATP-binding protein (OppD), two transmembrane proteins (OppB and OppC) and a solute-binding protein (OppA).

Its subcellular location is the cell inner membrane. It carries out the reaction a [peptide](out) + ATP + H2O = a [peptide](in) + ADP + phosphate + H(+). Its function is as follows. Part of the ABC transporter complex OppABCD involved in the uptake of oligopeptides. Responsible for energy coupling to the transport system. This Mycobacterium bovis (strain ATCC BAA-935 / AF2122/97) protein is Oligopeptide transport ATP-binding protein OppD.